The chain runs to 399 residues: Acetylornithine aminotransferase (399 aa).

Residues 99 to 100 (GA) and F132 each bind pyridoxal 5'-phosphate. Position 135 (R135) interacts with N(2)-acetyl-L-ornithine. Pyridoxal 5'-phosphate is bound at residue 217 to 220 (DEVQ). Position 246 is an N6-(pyridoxal phosphate)lysine (K246). Position 274 (T274) interacts with N(2)-acetyl-L-ornithine. Residue T275 participates in pyridoxal 5'-phosphate binding.

The protein belongs to the class-III pyridoxal-phosphate-dependent aminotransferase family. ArgD subfamily. In terms of assembly, homodimer. Pyridoxal 5'-phosphate serves as cofactor.

It is found in the cytoplasm. It catalyses the reaction N(2)-acetyl-L-ornithine + 2-oxoglutarate = N-acetyl-L-glutamate 5-semialdehyde + L-glutamate. It participates in amino-acid biosynthesis; L-arginine biosynthesis; N(2)-acetyl-L-ornithine from L-glutamate: step 4/4. This chain is Acetylornithine aminotransferase, found in Agrobacterium fabrum (strain C58 / ATCC 33970) (Agrobacterium tumefaciens (strain C58)).